Consider the following 505-residue polypeptide: MYKFIKYISIYIKKLFFLNISFFKKVISIFQVDNILFLKKSSQELLKLSRVTLPKKFFVLINSEVLNRGKLCVRKGDLVLRGQTLTLGCGNIVSIHSPTSGRIIDVINNYIFFLDQFFAVVIVESDGRDLWISRTPICNYTQFSSKKLINLIYHSGILGLSGSGFSTSKKLQCAVGKVHTLVVNAVESEPCVTSDDCLIQNFSKEIIDGCKILIWILKIKKILIVVSEEKIIAFNVLKKSVINLKDFELLKVKNKYPSGSSKKLIQILFNKEIPQGKHAIDLGIIMYNVATVFAIKKAILDGEPLTERVITLYGDKFLPSKNVLVRIGTPISHLMKIYKLNEKTLKVNIGGPITGLLIRNFNFSVLKTNNCIMFVSIQNNELNNFEEKNCIRCAACSYSCPMNLLPEQLYWYSKHSNHEKTQIYNIQDCIECGICEQVCPSDIPLMSYYRREKKQISIAKFKNYQIKKFKNLFLLRKQRLNNLNSRKKNTIVSQYIALNKFNFKV.

4Fe-4S ferredoxin-type domains follow at residues 381 to 410 and 420 to 449; these read ELNNFEEKNCIRCAACSYSCPMNLLPEQLY and KTQIYNIQDCIECGICEQVCPSDIPLMSYY. Cysteine 390, cysteine 393, cysteine 396, cysteine 400, cysteine 429, cysteine 432, cysteine 435, and cysteine 439 together coordinate [4Fe-4S] cluster.

The protein belongs to the 4Fe4S bacterial-type ferredoxin family. RnfC subfamily. In terms of assembly, the complex is composed of six subunits: RnfA, RnfB, RnfC, RnfD, RnfE and RnfG. Requires [4Fe-4S] cluster as cofactor.

The protein resides in the cell inner membrane. Its function is as follows. Part of a membrane-bound complex that couples electron transfer with translocation of ions across the membrane. The polypeptide is Ion-translocating oxidoreductase complex subunit C (Buchnera aphidicola subsp. Baizongia pistaciae (strain Bp)).